We begin with the raw amino-acid sequence, 333 residues long: MQTPQVTVLGAGSYGTALAICFARKGIPTTLWGRDADKVAVMQTAHENEEYLPACPFPESLKVTADLGEALKDVKNVVVVVPSHSFSSMLKQAKPLLAEHARVAWATKGLEPDSGRLLYEVAEETLGDEHPLAVLSGPTFAIEMAKGLPTAISMSSTDQAFVEELSGLLHCDRSFRVYTNNDFIGVQLGGVVKNVIAIGAGMADGIGFGANARTALITRGLAELTRLGLKLGAKSETFTGMAGLGDLILTCTDNQSRNRRFGMALGQGKGVEEALKSIGQSVEGYRNTREVVALAARNEVEMPICEQIYAVLYEGKEPQQAAIDLLSRERKTE.

NADPH is bound by residues Ser13, Tyr14, Arg34, and Lys108. Sn-glycerol 3-phosphate is bound by residues Lys108, Gly137, and Thr139. Ala141 provides a ligand contact to NADPH. 5 residues coordinate sn-glycerol 3-phosphate: Lys193, Asp246, Ser256, Arg257, and Asn258. The Proton acceptor role is filled by Lys193. An NADPH-binding site is contributed by Arg257. Glu283 serves as a coordination point for NADPH.

It belongs to the NAD-dependent glycerol-3-phosphate dehydrogenase family.

It localises to the cytoplasm. It carries out the reaction sn-glycerol 3-phosphate + NAD(+) = dihydroxyacetone phosphate + NADH + H(+). The catalysed reaction is sn-glycerol 3-phosphate + NADP(+) = dihydroxyacetone phosphate + NADPH + H(+). It functions in the pathway membrane lipid metabolism; glycerophospholipid metabolism. In terms of biological role, catalyzes the reduction of the glycolytic intermediate dihydroxyacetone phosphate (DHAP) to sn-glycerol 3-phosphate (G3P), the key precursor for phospholipid synthesis. The polypeptide is Glycerol-3-phosphate dehydrogenase [NAD(P)+] (Idiomarina loihiensis (strain ATCC BAA-735 / DSM 15497 / L2-TR)).